The primary structure comprises 200 residues: LexA repressor (200 aa).

The segment at residues 29–48 (IRDIARAFRITPRGAIVHLN) is a DNA-binding region (H-T-H motif). Residues serine 120 and lysine 158 each act as for autocatalytic cleavage activity in the active site.

It belongs to the peptidase S24 family. In terms of assembly, homodimer.

It catalyses the reaction Hydrolysis of Ala-|-Gly bond in repressor LexA.. In terms of biological role, represses a number of genes involved in the response to DNA damage (SOS response), including recA and lexA. In the presence of single-stranded DNA, RecA interacts with LexA causing an autocatalytic cleavage which disrupts the DNA-binding part of LexA, leading to derepression of the SOS regulon and eventually DNA repair. The chain is LexA repressor from Pseudothermotoga lettingae (strain ATCC BAA-301 / DSM 14385 / NBRC 107922 / TMO) (Thermotoga lettingae).